A 467-amino-acid chain; its full sequence is Methylenetetrahydrofolate--tRNA-(uracil-5-)-methyltransferase TrmFO (467 aa).

11–16 (GAGLAG) is an FAD binding site.

It belongs to the MnmG family. TrmFO subfamily. FAD serves as cofactor.

It is found in the cytoplasm. The enzyme catalyses uridine(54) in tRNA + (6R)-5,10-methylene-5,6,7,8-tetrahydrofolate + NADH + H(+) = 5-methyluridine(54) in tRNA + (6S)-5,6,7,8-tetrahydrofolate + NAD(+). The catalysed reaction is uridine(54) in tRNA + (6R)-5,10-methylene-5,6,7,8-tetrahydrofolate + NADPH + H(+) = 5-methyluridine(54) in tRNA + (6S)-5,6,7,8-tetrahydrofolate + NADP(+). Functionally, catalyzes the folate-dependent formation of 5-methyl-uridine at position 54 (M-5-U54) in all tRNAs. The sequence is that of Methylenetetrahydrofolate--tRNA-(uracil-5-)-methyltransferase TrmFO from Prochlorococcus marinus (strain NATL2A).